A 304-amino-acid polypeptide reads, in one-letter code: Recombination-associated protein RdgC (304 aa).

This sequence belongs to the RdgC family.

The protein localises to the cytoplasm. It localises to the nucleoid. May be involved in recombination. This chain is Recombination-associated protein RdgC, found in Shewanella sp. (strain ANA-3).